A 484-amino-acid polypeptide reads, in one-letter code: Monocarboxylate transporter 2 (484 aa).

The Cytoplasmic portion of the chain corresponds to 1–16; the sequence is MPAPTAVPPPHPLPPD. A helical membrane pass occupies residues 17-37; sequence GGWGWVVVGASFISIGFSYAF. Over 38–60 the chain is Extracellular; that stretch reads PKSVTVFFKDIQEIFRAGHSKVA. The chain crosses the membrane as a helical span at residues 61-81; the sequence is WISSIMLAVMYAGGPISSVLV. The Cytoplasmic portion of the chain corresponds to 82–87; it reads NKYGSR. A helical membrane pass occupies residues 88–108; sequence PVVVIGGLLCCTGMILASFST. Residues 109 to 116 lie on the Extracellular side of the membrane; that stretch reads SMIQLYLT. A helical transmembrane segment spans residues 117–137; sequence IGFISGLGLAFNLQPALTILG. Over 138–144 the chain is Cytoplasmic; that stretch reads KYFYRRR. A helical membrane pass occupies residues 145 to 165; it reads PLASGLAMTGSPVFLSSLAPF. Residues 166–174 lie on the Extracellular side of the membrane; it reads NQYLFNSYG. The helical transmembrane segment at 175–195 threads the bilayer; sequence LKGSFLILGGIFLHSCVAGSL. The Cytoplasmic portion of the chain corresponds to 196–245; that stretch reads MRPVGTSQQSPKSKSKVSSRHDSSTKKAPKLTLAQRINMFLDFSLFKHRG. The tract at residues 198–223 is disordered; sequence PVGTSQQSPKSKSKVSSRHDSSTKKA. A helical membrane pass occupies residues 246 to 266; the sequence is FLIYLSGNVIMFLGFFAPVIF. The Extracellular segment spans residues 267–281; that stretch reads LSPYAKNRGVDDYKA. Residues 282-302 form a helical membrane-spanning segment; it reads AYLLSVMAFVDMFSRPCGGLI. Residues 303–311 lie on the Cytoplasmic side of the membrane; the sequence is ANTRLVRPR. The chain crosses the membrane as a helical span at residues 312–332; that stretch reads IQYFFSLAIVFTGVCHLLCPL. At 333-337 the chain is on the extracellular side; that stretch reads AESYT. The chain crosses the membrane as a helical span at residues 338–358; it reads ALVVYAIFFGYGFGSVSSILF. Over 359–372 the chain is Cytoplasmic; it reads ETLMDLVGPARFSS. A helical transmembrane segment spans residues 373-393; it reads AVGLVTIVECCPVLLGPPLAG. At 394–405 the chain is on the extracellular side; that stretch reads KLVDETGEHKYL. The helical transmembrane segment at 406–426 threads the bilayer; that stretch reads FVASGAIVVLAGIWLFIGNAI. Over 427–484 the chain is Cytoplasmic; that stretch reads NYRLLAKERKREKARKKKSPNRHSKELESLSKSNQDDVAVRVPQAHRSPSDKERESNI. Residues 437–484 are disordered; the sequence is REKARKKKSPNRHSKELESLSKSNQDDVAVRVPQAHRSPSDKERESNI. Over residues 438–448 the composition is skewed to basic residues; sequence EKARKKKSPNR. Composition is skewed to basic and acidic residues over residues 449–465 and 474–484; these read HSKE…DDVA and SPSDKERESNI.

Belongs to the major facilitator superfamily. Monocarboxylate porter (TC 2.A.1.13) family. Homodimer. Interacts with GRID2IP. Interacts with EMB; interaction mediates SLC16A7 targeting to the plasma membrane. Interacts with isoform 2 of BSG.

The protein localises to the cell membrane. Its subcellular location is the basolateral cell membrane. The protein resides in the cytoplasm. It catalyses the reaction 3-methyl-2-oxobutanoate(out) + H(+)(out) = 3-methyl-2-oxobutanoate(in) + H(+)(in). The catalysed reaction is (S)-lactate(in) + H(+)(in) = (S)-lactate(out) + H(+)(out). It carries out the reaction acetoacetate(out) + H(+)(out) = acetoacetate(in) + H(+)(in). The enzyme catalyses (R)-3-hydroxybutanoate(out) + H(+)(out) = (R)-3-hydroxybutanoate(in) + H(+)(in). It catalyses the reaction 4-methyl-2-oxopentanoate(out) + H(+)(out) = 4-methyl-2-oxopentanoate(in) + H(+)(in). The catalysed reaction is pyruvate(out) + H(+)(out) = pyruvate(in) + H(+)(in). It carries out the reaction (S)-3-hydroxybutanoate(out) + H(+)(out) = (S)-3-hydroxybutanoate(in) + H(+)(in). Its activity is regulated as follows. Transport activity exhibits steep dependence on substrate concentration. Substrate concentration sensitivity of SLC16A7 arises from the strong inter-subunit cooperativity of the SLC16A7 dimer during transport. Inhibited by AR-C155858. Functionally, proton-coupled monocarboxylate symporter. Catalyzes the rapid transport across the plasma membrane of monocarboxylates such as L-lactate, pyruvate and ketone bodies, acetoacetate, beta-hydroxybutyrate and acetate. Dimerization is functionally required and both subunits work cooperatively in transporting substrate. In Meriones unguiculatus (Mongolian jird), this protein is Monocarboxylate transporter 2 (SLC16A7).